Consider the following 280-residue polypeptide: Protein FAM131C (280 aa).

Residues 195–280 are disordered; the sequence is QDSLPSGPSQ…LWEEDEVFYN (86 aa). Over residues 197-211 the composition is skewed to polar residues; the sequence is SLPSGPSQDDSLQAF. The span at 215–227 shows a compositional bias: pro residues; it reads SPSPDSCPSPEEP.

This sequence belongs to the FAM131 family.

The chain is Protein FAM131C (FAM131C) from Homo sapiens (Human).